Reading from the N-terminus, the 178-residue chain is ATP synthase subunit delta (178 aa).

The protein belongs to the ATPase delta chain family. As to quaternary structure, F-type ATPases have 2 components, F(1) - the catalytic core - and F(0) - the membrane proton channel. F(1) has five subunits: alpha(3), beta(3), gamma(1), delta(1), epsilon(1). F(0) has three main subunits: a(1), b(2) and c(10-14). The alpha and beta chains form an alternating ring which encloses part of the gamma chain. F(1) is attached to F(0) by a central stalk formed by the gamma and epsilon chains, while a peripheral stalk is formed by the delta and b chains.

The protein resides in the cell membrane. In terms of biological role, f(1)F(0) ATP synthase produces ATP from ADP in the presence of a proton or sodium gradient. F-type ATPases consist of two structural domains, F(1) containing the extramembraneous catalytic core and F(0) containing the membrane proton channel, linked together by a central stalk and a peripheral stalk. During catalysis, ATP synthesis in the catalytic domain of F(1) is coupled via a rotary mechanism of the central stalk subunits to proton translocation. Its function is as follows. This protein is part of the stalk that links CF(0) to CF(1). It either transmits conformational changes from CF(0) to CF(1) or is implicated in proton conduction. The polypeptide is ATP synthase subunit delta (Streptococcus pyogenes serotype M4 (strain MGAS10750)).